The following is a 24-amino-acid chain: TAEVMSXVTAXFGXALEEXXDEXG.

This sequence belongs to the PBP/GOBP family. As to quaternary structure, homodimer. As to expression, antenna.

Present in the aqueous fluid surrounding olfactory sensory dendrites and are thought to aid in the capture and transport of hydrophobic odorants into and through this fluid. This is General odorant-binding protein from Antheraea polyphemus (Polyphemus moth).